Here is a 313-residue protein sequence, read N- to C-terminus: Undecaprenyl-diphosphatase (313 aa).

Helical transmembrane passes span 121 to 141 (YRIGWYVIIATIPIGVLGFLF), 152 to 172 (LWLVSFMLIAFALVIAAAEHY), 187 to 207 (GLVMGFAQCLALIPGVSRSGA), 225 to 245 (FSFLLAIPAVTASGLFSLPDA), 259 to 279 (QLLVATIVSFVVGYASVAWLL), and 290 to 310 (FVGYRIVLGLVIMGLLGAGVI).

It belongs to the UppP family.

Its subcellular location is the cell membrane. The enzyme catalyses di-trans,octa-cis-undecaprenyl diphosphate + H2O = di-trans,octa-cis-undecaprenyl phosphate + phosphate + H(+). Catalyzes the dephosphorylation of undecaprenyl diphosphate (UPP). Confers resistance to bacitracin. This chain is Undecaprenyl-diphosphatase, found in Nocardia farcinica (strain IFM 10152).